The following is a 328-amino-acid chain: Hairy/enhancer-of-split related with YRPW motif-like protein (328 aa).

The disordered stretch occupies residues 1–54 (MKRPREPSGSDSESDGPIDVGREGELSQMARPLSTPSPSQMQARKKRRGIIEKR). The interval 42–111 (QARKKRRGII…GGTGFFDARA (70 aa)) is transcriptional repression and interaction with NCOR1 and SIN3A. The region spanning 43–98 (ARKKRRGIIEKRRRDRINSSLSELRRLVPTAFEKQGSSKLEKAEVLQMTVDHLKML) is the bHLH domain. The Orange domain occupies 116–153 (FRSIGFRECLTEVIRYLGVLEGPSSRADPVRIRLLSHL). The disordered stretch occupies residues 236–272 (LLPSRGASSTRRARPLERPAAPLPAAPSGRATRGSHM).

It belongs to the HEY family. Self-associates. Interacts with GATA4, GATA6, HES1, HEY1 and HEY2. Interacts with HDAC1, NCOR1 and SIN3A.

The protein resides in the nucleus. Downstream effector of Notch signaling which may be required for cardiovascular development. Transcriptional repressor which binds preferentially to the canonical E box sequence 5'-CACGTG-3'. Represses transcription by the cardiac transcriptional activators GATA4 and GATA6. This is Hairy/enhancer-of-split related with YRPW motif-like protein (HEYL) from Bos taurus (Bovine).